The primary structure comprises 465 residues: Ribulose bisphosphate carboxylase large chain (465 aa).

An N6,N6,N6-trimethyllysine modification is found at lysine 4. Asparagine 113 and threonine 163 together coordinate substrate. The active-site Proton acceptor is lysine 165. Lysine 167 is a binding site for substrate. 3 residues coordinate Mg(2+): lysine 191, aspartate 193, and glutamate 194. N6-carboxylysine is present on lysine 191. The active-site Proton acceptor is the histidine 284. The substrate site is built by arginine 285, histidine 317, and serine 369.

The protein belongs to the RuBisCO large chain family. Type I subfamily. In terms of assembly, heterohexadecamer of 8 large chains and 8 small chains; disulfide-linked. The disulfide link is formed within the large subunit homodimers. Mg(2+) is required as a cofactor. In terms of processing, the disulfide bond which can form in the large chain dimeric partners within the hexadecamer appears to be associated with oxidative stress and protein turnover.

The protein localises to the plastid. The protein resides in the chloroplast. It carries out the reaction 2 (2R)-3-phosphoglycerate + 2 H(+) = D-ribulose 1,5-bisphosphate + CO2 + H2O. It catalyses the reaction D-ribulose 1,5-bisphosphate + O2 = 2-phosphoglycolate + (2R)-3-phosphoglycerate + 2 H(+). Functionally, ruBisCO catalyzes two reactions: the carboxylation of D-ribulose 1,5-bisphosphate, the primary event in carbon dioxide fixation, as well as the oxidative fragmentation of the pentose substrate in the photorespiration process. Both reactions occur simultaneously and in competition at the same active site. This Manilkara zapota (Sapodilla plum) protein is Ribulose bisphosphate carboxylase large chain.